We begin with the raw amino-acid sequence, 133 residues long: ATP synthase epsilon chain (133 aa).

Positions 81–110 (AAERPEQIDTERARKAKERAEQRLASEHVD) are disordered.

The protein belongs to the ATPase epsilon chain family. In terms of assembly, F-type ATPases have 2 components, CF(1) - the catalytic core - and CF(0) - the membrane proton channel. CF(1) has five subunits: alpha(3), beta(3), gamma(1), delta(1), epsilon(1). CF(0) has three main subunits: a, b and c.

It localises to the cell membrane. Functionally, produces ATP from ADP in the presence of a proton gradient across the membrane. The polypeptide is ATP synthase epsilon chain (Shouchella clausii (strain KSM-K16) (Alkalihalobacillus clausii)).